We begin with the raw amino-acid sequence, 496 residues long: MTTGYILIAAILILGGVIATVGDRIGTRVGKARLSLFNLRPKNTAVLVTILTGGLVSATTLAILFIADEGLRKGVFELEDIQKDLRQKREQLKVAEEQKTQVEIERNKVNQELETTRTDKKQVETQRDQAKKEKLKAQQDLAQTQAQYQRTQSRLGQVVTQYQKAIAELQSVYNQRKALQGAVEQLKTERRRLYAEAKKAIEQRDRELANRQQAIEQRDRELANRQQALQQRDQKISQLDKIIQNRNLEIAQREEVIAKRESRLKELETQQDYLEQEVARLEKYYQSYRDLRLGKLALVRGQVLASAVIRTNQVAATRQIIIQLLQEANRNASLELSEPGSNSANIELLRITPDRIEQLIQQINDGREYVVRIFSAGNYVRGENQIEFFADTARNVLVFSGSEVLATTTADPRSMTSYQLRQRLDLLISASQFRARNAGIVEGVQIDGTFLRFVSLLRQLDQPIEIKAIAAEDTYTAGPLRVRLVAIQNGKVILST.

The N-terminal stretch at 1–19 is a signal peptide; sequence MTTGYILIAAILILGGVIA. Residues 45 to 67 form a helical membrane-spanning segment; that stretch reads AVLVTILTGGLVSATTLAILFIA. The tract at residues 113-137 is disordered; sequence LETTRTDKKQVETQRDQAKKEKLKA.

It localises to the membrane. This is an uncharacterized protein from Nostoc sp. (strain PCC 7120 / SAG 25.82 / UTEX 2576).